The sequence spans 303 residues: CDAN1-interacting nuclease 1 (303 aa).

The protein localises to the nucleus. Its subcellular location is the cytoplasm. Its function is as follows. May play a role in erythroid cell differentiation. The sequence is that of CDAN1-interacting nuclease 1 from Xenopus laevis (African clawed frog).